A 79-amino-acid polypeptide reads, in one-letter code: Dolichyl-diphosphooligosaccharide--protein glycosyltransferase subunit TMEM258 (79 aa).

2 helical membrane-spanning segments follow: residues 19–39 (PLLT…FTMI) and 55–75 (FIAA…LLWV).

The protein belongs to the OST5 family. In terms of assembly, component of the oligosaccharyltransferase (OST) complex.

The protein resides in the membrane. Its pathway is protein modification; protein glycosylation. Its function is as follows. Subunit of the oligosaccharyl transferase (OST) complex that catalyzes the initial transfer of a defined glycan (Glc(3)Man(9)GlcNAc(2) in eukaryotes) from the lipid carrier dolichol-pyrophosphate to an asparagine residue within an Asn-X-Ser/Thr consensus motif in nascent polypeptide chains, the first step in protein N-glycosylation. N-glycosylation occurs cotranslationally and the complex associates with the Sec61 complex at the channel-forming translocon complex that mediates protein translocation across the endoplasmic reticulum (ER). All subunits are required for a maximal enzyme activity. The polypeptide is Dolichyl-diphosphooligosaccharide--protein glycosyltransferase subunit TMEM258 (Caenorhabditis elegans).